We begin with the raw amino-acid sequence, 129 residues long: Sulfurtransferase TusD (129 aa).

Cysteine 79 (cysteine persulfide intermediate) is an active-site residue.

This sequence belongs to the DsrE/TusD family. Heterohexamer, formed by a dimer of trimers. The hexameric TusBCD complex contains 2 copies each of TusB, TusC and TusD. The TusBCD complex interacts with TusE.

The protein resides in the cytoplasm. Part of a sulfur-relay system required for 2-thiolation of 5-methylaminomethyl-2-thiouridine (mnm(5)s(2)U) at tRNA wobble positions. Accepts sulfur from TusA and transfers it in turn to TusE. This chain is Sulfurtransferase TusD, found in Pectobacterium atrosepticum (strain SCRI 1043 / ATCC BAA-672) (Erwinia carotovora subsp. atroseptica).